A 288-amino-acid polypeptide reads, in one-letter code: uncharacterized protein (288 aa).

This is an uncharacterized protein from Ictaluridae (bullhead catfishes).